The chain runs to 415 residues: Thyroxine-binding globulin (415 aa).

The N-terminal stretch at 1 to 20 (MSPFLYLVLLVLGLHATIHC) is a signal peptide. 4 N-linked (GlcNAc...) asparagine glycosylation sites follow: Asn-36, Asn-99, Asn-165, and Asn-253. 2 residues coordinate thyroxine: Asn-293 and Arg-398.

It belongs to the serpin family.

It localises to the secreted. Functionally, major thyroid hormone transport protein in serum. The polypeptide is Thyroxine-binding globulin (SERPINA7) (Pan troglodytes (Chimpanzee)).